The primary structure comprises 101 residues: Small ribosomal subunit protein uS14 (101 aa).

This sequence belongs to the universal ribosomal protein uS14 family. Part of the 30S ribosomal subunit. Contacts proteins S3 and S10.

Functionally, binds 16S rRNA, required for the assembly of 30S particles and may also be responsible for determining the conformation of the 16S rRNA at the A site. The sequence is that of Small ribosomal subunit protein uS14 from Paenarthrobacter aurescens (strain TC1).